Consider the following 210-residue polypeptide: Proteasome subunit beta (210 aa).

Positions 1 to 9 (MDNDKYLKG) are cleaved as a propeptide — removed in mature form; by autocatalysis. The Nucleophile role is filled by T10.

This sequence belongs to the peptidase T1B family. As to quaternary structure, the 20S proteasome core is composed of 14 alpha and 14 beta subunits that assemble into four stacked heptameric rings, resulting in a barrel-shaped structure. The two inner rings, each composed of seven catalytic beta subunits, are sandwiched by two outer rings, each composed of seven alpha subunits. The catalytic chamber with the active sites is on the inside of the barrel. Has a gated structure, the ends of the cylinder being occluded by the N-termini of the alpha-subunits. Is capped at one or both ends by the proteasome regulatory ATPase, PAN.

Its subcellular location is the cytoplasm. It carries out the reaction Cleavage of peptide bonds with very broad specificity.. The formation of the proteasomal ATPase PAN-20S proteasome complex, via the docking of the C-termini of PAN into the intersubunit pockets in the alpha-rings, triggers opening of the gate for substrate entry. Interconversion between the open-gate and close-gate conformations leads to a dynamic regulation of the 20S proteasome proteolysis activity. In terms of biological role, component of the proteasome core, a large protease complex with broad specificity involved in protein degradation. The polypeptide is Proteasome subunit beta (Methanosarcina thermophila).